The primary structure comprises 490 residues: Cardiolipin synthase A (490 aa).

2 helical membrane passes run 20 to 40 and 49 to 69; these read LGLL…HAVL and IAWA…YLVF. PLD phosphodiesterase domains are found at residues 229-256 and 403-430; these read VNFR…GVEY and QPGF…DNRS. Catalysis depends on residues histidine 234, lysine 236, aspartate 241, histidine 408, lysine 410, and aspartate 415.

Belongs to the phospholipase D family. Cardiolipin synthase subfamily. ClsA sub-subfamily.

It is found in the cell inner membrane. It carries out the reaction 2 a 1,2-diacyl-sn-glycero-3-phospho-(1'-sn-glycerol) = a cardiolipin + glycerol. In terms of biological role, catalyzes the reversible phosphatidyl group transfer from one phosphatidylglycerol molecule to another to form cardiolipin (CL) (diphosphatidylglycerol) and glycerol. The sequence is that of Cardiolipin synthase A from Pseudomonas aeruginosa (strain LESB58).